Here is a 342-residue protein sequence, read N- to C-terminus: Succinylglutamate desuccinylase (342 aa).

His63, Glu66, and His155 together coordinate Zn(2+). Residue Glu219 is part of the active site.

It belongs to the AspA/AstE family. Succinylglutamate desuccinylase subfamily. The cofactor is Zn(2+).

It carries out the reaction N-succinyl-L-glutamate + H2O = L-glutamate + succinate. Its pathway is amino-acid degradation; L-arginine degradation via AST pathway; L-glutamate and succinate from L-arginine: step 5/5. Its function is as follows. Transforms N(2)-succinylglutamate into succinate and glutamate. This Vibrio vulnificus (strain YJ016) protein is Succinylglutamate desuccinylase.